Reading from the N-terminus, the 255-residue chain is Cell division protein ZapD (255 aa).

Belongs to the ZapD family. In terms of assembly, interacts with FtsZ.

The protein resides in the cytoplasm. Functionally, cell division factor that enhances FtsZ-ring assembly. Directly interacts with FtsZ and promotes bundling of FtsZ protofilaments, with a reduction in FtsZ GTPase activity. The chain is Cell division protein ZapD from Methylococcus capsulatus (strain ATCC 33009 / NCIMB 11132 / Bath).